We begin with the raw amino-acid sequence, 335 residues long: Nonaprenyl diphosphate synthase (335 aa).

Residues Lys57, Arg60, and His90 each contribute to the isopentenyl diphosphate site. The Mg(2+) site is built by Asp97 and Asp101. Positions 97 to 101 (DDVMD) match the DDXXD motif motif. Arg107 is an isopentenyl diphosphate binding site. Residues 223-227 (DDIID) carry the DDXXD motif motif.

This sequence belongs to the FPP/GGPP synthase family. Mg(2+) is required as a cofactor.

The enzyme catalyses isopentenyl diphosphate + (2E)-geranyl diphosphate = (2E,6E)-farnesyl diphosphate + diphosphate. The catalysed reaction is isopentenyl diphosphate + (2E,6E)-farnesyl diphosphate = (2E,6E,10E)-geranylgeranyl diphosphate + diphosphate. It carries out the reaction 5 isopentenyl diphosphate + (2E,6E,10E)-geranylgeranyl diphosphate = all-trans-nonaprenyl diphosphate + 5 diphosphate. Its pathway is isoprenoid biosynthesis; farnesyl diphosphate biosynthesis; farnesyl diphosphate from geranyl diphosphate and isopentenyl diphosphate. The protein operates within isoprenoid biosynthesis; geranylgeranyl diphosphate biosynthesis; geranylgeranyl diphosphate from farnesyl diphosphate and isopentenyl diphosphate: step 1/1. Its function is as follows. Catalyzes the sequential condensations of isopentenyl pyrophosphate (IPP) with geranyl diphosphate (GPP) to yield (2E,6E)-farnesyl diphosphate (E,E-FPP), with E,E-FPP to yield geranylgeranyl diphosphate (GGPP) and with GGPP to yield nonaprenyl diphosphate. May also have weak activity with dimethylallyl diphosphate (DMAPP). The sequence is that of Nonaprenyl diphosphate synthase from Mycobacterium tuberculosis (strain ATCC 25618 / H37Rv).